Reading from the N-terminus, the 156-residue chain is ATP synthase subunit b (156 aa).

A helical membrane pass occupies residues 12–32 (IAFAIFVLFCMKFIWPALMGA).

This sequence belongs to the ATPase B chain family. As to quaternary structure, F-type ATPases have 2 components, F(1) - the catalytic core - and F(0) - the membrane proton channel. F(1) has five subunits: alpha(3), beta(3), gamma(1), delta(1), epsilon(1). F(0) has three main subunits: a(1), b(2) and c(10-14). The alpha and beta chains form an alternating ring which encloses part of the gamma chain. F(1) is attached to F(0) by a central stalk formed by the gamma and epsilon chains, while a peripheral stalk is formed by the delta and b chains.

The protein resides in the cell inner membrane. In terms of biological role, f(1)F(0) ATP synthase produces ATP from ADP in the presence of a proton or sodium gradient. F-type ATPases consist of two structural domains, F(1) containing the extramembraneous catalytic core and F(0) containing the membrane proton channel, linked together by a central stalk and a peripheral stalk. During catalysis, ATP synthesis in the catalytic domain of F(1) is coupled via a rotary mechanism of the central stalk subunits to proton translocation. Component of the F(0) channel, it forms part of the peripheral stalk, linking F(1) to F(0). This chain is ATP synthase subunit b, found in Psychrobacter sp. (strain PRwf-1).